The chain runs to 153 residues: Ribosome maturation factor RimP (153 aa).

The protein belongs to the RimP family.

It localises to the cytoplasm. In terms of biological role, required for maturation of 30S ribosomal subunits. This chain is Ribosome maturation factor RimP, found in Nostoc punctiforme (strain ATCC 29133 / PCC 73102).